The chain runs to 166 residues: Phosphopantetheine adenylyltransferase (166 aa).

Substrate is bound at residue S11. Residues 11–12 and H19 each bind ATP; that span reads SF. The substrate site is built by K43, A76, and R90. ATP is bound by residues 91–93, E101, and 126–132; these read GLR and LQPISSS.

Belongs to the bacterial CoaD family. As to quaternary structure, homohexamer. Mg(2+) is required as a cofactor.

It is found in the cytoplasm. The catalysed reaction is (R)-4'-phosphopantetheine + ATP + H(+) = 3'-dephospho-CoA + diphosphate. It participates in cofactor biosynthesis; coenzyme A biosynthesis; CoA from (R)-pantothenate: step 4/5. In terms of biological role, reversibly transfers an adenylyl group from ATP to 4'-phosphopantetheine, yielding dephospho-CoA (dPCoA) and pyrophosphate. This chain is Phosphopantetheine adenylyltransferase, found in Streptococcus equi subsp. zooepidemicus (strain H70).